Reading from the N-terminus, the 567-residue chain is MASEQSSPEINADNLNSSAADVHVQPPGEKEWSDGFYDKEVINGNTPDAPKRGFLGYLIIYLLCYPVSFGGFLPGWDSGITAGFINMDNFKMNFGSYKHSTGEYYLSNVRMGLLVAMFSVGCSIGGVAFARLADTLGRRLAIVIVVLVYMVGAIIQISSNHKWYQYFVGKIIYGLGAGGCSVLCPMLLSEIAPTDLRGGLVSLYQLNMTFGIFLGYCSVYGTRKYSNTAQWRIPVGLCFLWALIIIVGMLLVPESPRYLIECERHEEACVSIAKIDKVSPEDPWVLKQADEINAGVLAQRELGEASWKELFSVKTKVLQRLITGILVQTFLQLTGENYFFFYGTTIFKSVGLTDGFETSIVLGTVNFFSTIIAVMVVDKIGRRKCLLFGAASMMACMVIFASIGVKCLYPHGQDGPSSKGAGNAMIVFTCFYIFCFATTWAPVAYIVVAESFPSKVKSKAMSISTAFNWLWQFLIGFFTPFITGSIHFYYGYVFVGCLVAMFLYVFFFLPETIGLSLEETQLLYEEGIKPWKSASWVPPSRRGASSRETEAKKKSWKEVLKFPKSFN.

A compositionally biased stretch (polar residues) spans 1–19 (MASEQSSPEINADNLNSSA). The tract at residues 1–32 (MASEQSSPEINADNLNSSAADVHVQPPGEKEW) is disordered. The Cytoplasmic segment spans residues 1-55 (MASEQSSPEINADNLNSSAADVHVQPPGEKEWSDGFYDKEVINGNTPDAPKRGFL). A helical membrane pass occupies residues 56-76 (GYLIIYLLCYPVSFGGFLPGW). Topologically, residues 77 to 112 (DSGITAGFINMDNFKMNFGSYKHSTGEYYLSNVRMG) are extracellular. Residues 113–133 (LLVAMFSVGCSIGGVAFARLA) form a helical membrane-spanning segment. Over 134–139 (DTLGRR) the chain is Cytoplasmic. The helical transmembrane segment at 140-160 (LAIVIVVLVYMVGAIIQISSN) threads the bilayer. The Extracellular segment spans residues 161–170 (HKWYQYFVGK). Residues 171–191 (IIYGLGAGGCSVLCPMLLSEI) form a helical membrane-spanning segment. At 192-197 (APTDLR) the chain is on the cytoplasmic side. The chain crosses the membrane as a helical span at residues 198 to 218 (GGLVSLYQLNMTFGIFLGYCS). The Extracellular segment spans residues 219 to 232 (VYGTRKYSNTAQWR). Residues 233–253 (IPVGLCFLWALIIIVGMLLVP) traverse the membrane as a helical segment. The Cytoplasmic portion of the chain corresponds to 254–336 (ESPRYLIECE…VQTFLQLTGE (83 aa)). A helical transmembrane segment spans residues 337 to 353 (NYFFFYGTTIFKSVGLT). At 354 to 359 (DGFETS) the chain is on the extracellular side. A helical membrane pass occupies residues 360–377 (IVLGTVNFFSTIIAVMVV). Topologically, residues 378–384 (DKIGRRK) are cytoplasmic. Residues 385 to 405 (CLLFGAASMMACMVIFASIGV) traverse the membrane as a helical segment. Residues 406 to 427 (KCLYPHGQDGPSSKGAGNAMIV) lie on the Extracellular side of the membrane. Residues 428-448 (FTCFYIFCFATTWAPVAYIVV) traverse the membrane as a helical segment. Topologically, residues 449-465 (AESFPSKVKSKAMSIST) are cytoplasmic. The helical transmembrane segment at 466–486 (AFNWLWQFLIGFFTPFITGSI) threads the bilayer. Residue His-487 is a topological domain, extracellular. Residues 488–508 (FYYGYVFVGCLVAMFLYVFFF) traverse the membrane as a helical segment. Residues 509 to 567 (LPETIGLSLEETQLLYEEGIKPWKSASWVPPSRRGASSRETEAKKKSWKEVLKFPKSFN) lie on the Cytoplasmic side of the membrane. Residues 533 to 555 (SASWVPPSRRGASSRETEAKKKS) form a disordered region. Basic and acidic residues predominate over residues 545–555 (SSRETEAKKKS).

This sequence belongs to the major facilitator superfamily. Sugar transporter (TC 2.A.1.1) family.

The protein resides in the membrane. Functionally, probable glucose transporter. The chain is Hexose transporter HXT16 (HXT16) from Saccharomyces cerevisiae (strain ATCC 204508 / S288c) (Baker's yeast).